We begin with the raw amino-acid sequence, 311 residues long: ATP synthase subunit a (311 aa).

A run of 6 helical transmembrane segments spans residues 62–82 (AVHV…GFIF), 123–143 (IAPM…MDLI), 170–190 (DPNA…MFSI), 213–233 (LWYL…VALI), 253–273 (IFIL…VGGV), and 276–296 (WAWA…FMVL).

Belongs to the ATPase A chain family. In terms of assembly, F-type ATPases have 2 components, CF(1) - the catalytic core - and CF(0) - the membrane proton channel. CF(1) has five subunits: alpha(3), beta(3), gamma(1), delta(1), epsilon(1). CF(0) has three main subunits: a(1), b(2) and c(9-12). The alpha and beta chains form an alternating ring which encloses part of the gamma chain. CF(1) is attached to CF(0) by a central stalk formed by the gamma and epsilon chains, while a peripheral stalk is formed by the delta and b chains.

It localises to the cell inner membrane. Functionally, key component of the proton channel; it plays a direct role in the translocation of protons across the membrane. This is ATP synthase subunit a from Saccharophagus degradans (strain 2-40 / ATCC 43961 / DSM 17024).